Here is a 518-residue protein sequence, read N- to C-terminus: Arginyl-tRNA--protein transferase 1 (518 aa).

Positions 149–165 are enriched in basic and acidic residues; the sequence is ESLQSEGKNSKKEEPHE. Positions 149–207 are disordered; that stretch reads ESLQSEGKNSKKEEPHELLQSQDSVGEKLGSGEPSHSVKVHTVPKPGKGADLSKPPCRK. Position 169 is a phosphoserine (Ser169).

The protein belongs to the R-transferase family. In terms of assembly, monomer. Interacts with LIAT1; LIAT1 is not a substrate of ATE1, the interaction takes place in the cytoplasm and seems to increase ATE1 arginyltransferase activity.

The protein localises to the nucleus. The protein resides in the cytoplasm. It carries out the reaction an N-terminal L-alpha-aminoacyl-[protein] + L-arginyl-tRNA(Arg) = an N-terminal L-arginyl-L-aminoacyl-[protein] + tRNA(Arg) + H(+). Its function is as follows. Involved in the post-translational conjugation of arginine to the N-terminal aspartate or glutamate of a protein. This arginylation is required for degradation of the protein via the ubiquitin pathway. Does not arginylate cysteine residues. In Macaca fascicularis (Crab-eating macaque), this protein is Arginyl-tRNA--protein transferase 1 (ATE1).